The chain runs to 674 residues: Zinc finger protein 750 (674 aa).

A CCHC-type zinc finger spans residues 25-51 (YKCFQCPFTCNEKSHLFNHMKYGLCKN). Zn(2+) contacts are provided by Cys-27, Cys-30, His-43, and Cys-49. 3 disordered regions span residues 105–125 (EAKENLDLKNEPKSHAEKTTV), 370–466 (LAKN…QSHS), and 594–674 (TSSP…PRVS). 2 stretches are compositionally biased toward polar residues: residues 401 to 411 (SPTNFTQSSQG) and 444 to 466 (DSQTIISRENSPSFGNDGVQSHS).

It is found in the nucleus. Transcription factor involved in epidermis differentiation. This Xenopus laevis (African clawed frog) protein is Zinc finger protein 750 (znf750).